A 536-amino-acid chain; its full sequence is Protein ST7 homolog (536 aa).

Transmembrane regions (helical) follow at residues 3–23 (CSWT…LFAL) and 49–69 (FYVA…IFEW). Residues 191–218 (LAEEESETVSQAENLLRRALRAIESTLN) adopt a coiled-coil conformation. The helical transmembrane segment at 465–485 (TLMMLLQTFICLAICILAVLA) threads the bilayer.

This sequence belongs to the ST7 family.

Its subcellular location is the membrane. This Caenorhabditis elegans protein is Protein ST7 homolog.